The primary structure comprises 696 residues: MKFAEHLSAHITPEWRKQYIQYEAFKDMLYSAQDQAPSVEVTDEDTVKRYFAKFEEKFFQTCEKELAKINTFYSEKLAEAQRRFATLQNELQSSLDAQRESIGVTTLRQRRKPVFHLSHEERVQHRNIKDLKLAFSEFYLSLILLQNYQNLNFTGFRKILKKHDKILETSRGADWRVGHVEVAPFYTCKKINQLISETEAVVTNELEDGDRQKAMKRLRVPPLGAAQPAPAWTTFRVGLFCGIFIVLNITLVLAAVFKLETDRTVWPLIRIYRGGFLLIEFLFLLGINTYGWRQAGVNHVLIFELNPRNNLSHQHLFEIAGFLGILWCLSLLACFFAPISVVPIYVYPLALYGFMVFFLINPTKTFYYKSRFWLLKLLFRVFTAPFHKVGFADFWLADQLNSLSVILMDLEYMICFYSFELKWDENKSLLPNDLQEPEFCHRYTYGVRAIVQCIPAWLRFIQCLRRYRDTKRAFPHLVNAGKYSTTFFTVTFAALYSTHKERQHSDTMVFLYLWVVFCAISSCYTLIWDLKMDWGLFDKNAGENTFLREEIVYPQKAYYYCAIIEDVILRFAWTIQISITATAFQPHVGDIIATVFAPLEVFRRFVWNFFRLENEHLNNCGEFRAVRDISVAPLNADDQTLLEQMMDQEDGVRNRQKNRSWKYNQSISLRRPRLASQSKARDTKVLIEDTDDEANT.

Over 1–228 (MKFAEHLSAH…RVPPLGAAQP (228 aa)) the chain is Cytoplasmic. An SPX domain is found at 2-224 (KFAEHLSAHI…MKRLRVPPLG (223 aa)). The important for inositol polyphosphate binding stretch occupies residues 158 to 165 (KILKKHDK). The helical transmembrane segment at 229-259 (APAWTTFRVGLFCGIFIVLNITLVLAAVFKL) threads the bilayer. The Extracellular portion of the chain corresponds to 260–264 (ETDRT). The chain crosses the membrane as a helical span at residues 265–296 (VWPLIRIYRGGFLLIEFLFLLGINTYGWRQAG). Residues 297 to 309 (VNHVLIFELNPRN) lie on the Cytoplasmic side of the membrane. Residues 310–337 (NLSHQHLFEIAGFLGILWCLSLLACFFA) traverse the membrane as a helical segment. Residues 338–343 (PISVVP) are Extracellular-facing. Residues 344 to 365 (IYVYPLALYGFMVFFLINPTKT) traverse the membrane as a helical segment. Residues 366-383 (FYYKSRFWLLKLLFRVFT) constitute an intramembrane region (helical). Residues 384-388 (APFHK) are Cytoplasmic-facing. Residues 389–422 (VGFADFWLADQLNSLSVILMDLEYMICFYSFELK) form a discontinuously helical membrane-spanning segment. Positions 398 and 401 each coordinate phosphate. Over 423 to 429 (WDENKSL) the chain is Extracellular. Residues 430-471 (LPNDLQEPEFCHRYTYGVRAIVQCIPAWLRFIQCLRRYRDTK) traverse the membrane as a discontinuously helical segment. The region spanning 439–643 (FCHRYTYGVR…LNADDQTLLE (205 aa)) is the EXS domain. Position 472 (Arg-472) is a topological domain, cytoplasmic. A helical membrane pass occupies residues 473–503 (AFPHLVNAGKYSTTFFTVTFAALYSTHKERQ). 2 residues coordinate phosphate: Lys-482 and Tyr-483. Topologically, residues 504 to 506 (HSD) are extracellular. A helical transmembrane segment spans residues 507–534 (TMVFLYLWVVFCAISSCYTLIWDLKMDW). Residues 535–553 (GLFDKNAGENTFLREEIVY) lie on the Cytoplasmic side of the membrane. The discontinuously helical transmembrane segment at 554 to 585 (PQKAYYYCAIIEDVILRFAWTIQISITATAFQ) threads the bilayer. Arg-570 lines the phosphate pocket. At 586–587 (PH) the chain is on the extracellular side. A helical membrane pass occupies residues 588–626 (VGDIIATVFAPLEVFRRFVWNFFRLENEHLNNCGEFRAV). Phosphate-binding residues include Arg-603 and Arg-604. Topologically, residues 627–696 (RDISVAPLNA…IEDTDDEANT (70 aa)) are cytoplasmic. Ser-668 carries the post-translational modification Phosphoserine. The segment at 672–696 (PRLASQSKARDTKVLIEDTDDEANT) is disordered. A Phosphothreonine modification is found at Thr-690.

It belongs to the SYG1 (TC 2.A.94) family. As to quaternary structure, homodimer.

Its subcellular location is the cell membrane. The catalysed reaction is phosphate(in) = phosphate(out). Functionally, inorganic ion transporter that mediates phosphate ion export across plasma membrane. Plays a major role in phosphate homeostasis, preventing intracellular phosphate accumulation and possible calcium phosphate precipitation, ultimately preserving calcium signaling. Binds inositol hexakisphosphate (Ins6P) and similar inositol polyphosphates, such as 5-diphospho-inositol pentakisphosphate (5-InsP7), which are important intracellular signaling molecules involved in regulation of phosphate flux. In Cricetulus griseus (Chinese hamster), this protein is Solute carrier family 53 member 1 (XPR1).